Reading from the N-terminus, the 729-residue chain is Pentatricopeptide repeat-containing protein At4g04370 (729 aa).

PPR repeat units follow at residues 10–44 (STKY…KLLP), 45–79 (DTFT…GFSS), 80–110 (DFYI…MRER), 111–145 (DVVH…GIKP), 178–208 (DIAV…MEQR), 209–243 (DMVS…GLRP), 244–278 (DQQT…GFDV), 279–309 (DMHL…IPNK), 310–344 (DVVC…GSDL), 345–379 (SSEA…GYTL), 380–414 (DTPA…DLVS), 415–445 (WNAI…TVQQ), 447–481 (DSFT…FIRP), 482–512 (CSLV…ISWK), 513–547 (DVVS…GMEP), 548–583 (NHVI…GVEP), and 584–618 (NHEH…PSID). A type E motif region spans residues 619–694 (VLGIILDACR…LPGWSKIEMN (76 aa)). The interval 695–723 (GKTTTFFMNHTSHSDDTVSLLKLLSREMM) is type E(+) motif.

Belongs to the PPR family. PCMP-E subfamily.

The chain is Pentatricopeptide repeat-containing protein At4g04370 (PCMP-E99) from Arabidopsis thaliana (Mouse-ear cress).